The primary structure comprises 740 residues: Phosphoribosylformylglycinamidine synthase subunit PurL (740 aa).

Residue His53 is part of the active site. The ATP site is built by Tyr56 and Lys95. A Mg(2+)-binding site is contributed by Glu97. Residues 98–101 (SHNH) and Arg120 each bind substrate. His99 acts as the Proton acceptor in catalysis. Mg(2+) is bound at residue Asp121. Gln244 lines the substrate pocket. Asp272 contributes to the Mg(2+) binding site. A substrate-binding site is contributed by 316-318 (ESQ). Residues Asp497 and Gly534 each contribute to the ATP site. Asn535 is a binding site for Mg(2+). Ser537 lines the substrate pocket.

The protein belongs to the FGAMS family. As to quaternary structure, monomer. Part of the FGAM synthase complex composed of 1 PurL, 1 PurQ and 2 PurS subunits.

It is found in the cytoplasm. It catalyses the reaction N(2)-formyl-N(1)-(5-phospho-beta-D-ribosyl)glycinamide + L-glutamine + ATP + H2O = 2-formamido-N(1)-(5-O-phospho-beta-D-ribosyl)acetamidine + L-glutamate + ADP + phosphate + H(+). It participates in purine metabolism; IMP biosynthesis via de novo pathway; 5-amino-1-(5-phospho-D-ribosyl)imidazole from N(2)-formyl-N(1)-(5-phospho-D-ribosyl)glycinamide: step 1/2. Part of the phosphoribosylformylglycinamidine synthase complex involved in the purines biosynthetic pathway. Catalyzes the ATP-dependent conversion of formylglycinamide ribonucleotide (FGAR) and glutamine to yield formylglycinamidine ribonucleotide (FGAM) and glutamate. The FGAM synthase complex is composed of three subunits. PurQ produces an ammonia molecule by converting glutamine to glutamate. PurL transfers the ammonia molecule to FGAR to form FGAM in an ATP-dependent manner. PurS interacts with PurQ and PurL and is thought to assist in the transfer of the ammonia molecule from PurQ to PurL. This chain is Phosphoribosylformylglycinamidine synthase subunit PurL, found in Rhodospirillum rubrum (strain ATCC 11170 / ATH 1.1.1 / DSM 467 / LMG 4362 / NCIMB 8255 / S1).